A 570-amino-acid chain; its full sequence is PTS system lactose-specific EIICB component (570 aa).

The PTS EIIC type-3 domain maps to 9-410; it reads IEKGKPFFEK…VVDIIIYYPF (402 aa). 9 helical membrane passes run 31 to 51, 65 to 85, 104 to 124, 133 to 153, 178 to 198, 223 to 243, 283 to 303, 340 to 360, and 382 to 402; these read GFIS…IAYV, AILM…VAGT, INFI…ASDP, AFMG…TVIV, FKDL…DLVI, GWIG…VGIH, MFIV…MFMW, VFFI…KLFV, and IIMG…LIVV. The region spanning 467–570 is the PTS EIIB type-3 domain; sequence QTNVLVLCAG…LDFVQQQFEN (104 aa). Catalysis depends on cysteine 474, which acts as the Phosphocysteine intermediate; for EIIB activity. A Phosphocysteine; by EIIA modification is found at cysteine 474.

It is found in the cell membrane. It catalyses the reaction lactose(out) + N(pros)-phospho-L-histidyl-[protein] = lactose 6-phosphate(in) + L-histidyl-[protein]. In terms of biological role, the phosphoenolpyruvate-dependent sugar phosphotransferase system (sugar PTS), a major carbohydrate active transport system, catalyzes the phosphorylation of incoming sugar substrates concomitantly with their translocation across the cell membrane. The enzyme II LacEF PTS system is involved in lactose transport. In Staphylococcus aureus (strain N315), this protein is PTS system lactose-specific EIICB component.